The following is a 233-amino-acid chain: Putative 26S proteasome non-ATPase regulatory subunit 8 homolog B (233 aa).

Residue Met1 is modified to N-acetylmethionine. Residues 38–217 (DHYLISLSLN…APCKEIPSLQ (180 aa)) enclose the PCI domain.

This sequence belongs to the proteasome subunit S14 family. As to quaternary structure, component of the 19S regulatory particle (RP/PA700) lid subcomplex of the 26S proteasome. The 26S proteasome is composed of a core protease (CP), known as the 20S proteasome, capped at one or both ends by the 19S regulatory particle (RP/PA700). The RP/PA700 complex is composed of at least 17 different subunits in two subcomplexes, the base and the lid, which form the portions proximal and distal to the 20S proteolytic core, respectively. Interacts with UCH1 and UCH2.

Acts as a regulatory subunit of the 26S proteasome which is involved in the ATP-dependent degradation of ubiquitinated proteins. The protein is Putative 26S proteasome non-ATPase regulatory subunit 8 homolog B of Arabidopsis thaliana (Mouse-ear cress).